Here is a 123-residue protein sequence, read N- to C-terminus: Protein Wnt-3a (123 aa).

The O-palmitoleoyl serine moiety is linked to residue serine 1. A disulfide bridge connects residues cysteine 89 and cysteine 104. Asparagine 90 carries an N-linked (GlcNAc...) asparagine glycan.

This sequence belongs to the Wnt family. Disulfide bonds have critical and distinct roles in secretion and activity. Loss of each conserved cysteine results in high molecular weight oxidized Wnt oligomers, which are formed through inter-Wnt disulfide bonding. In terms of processing, palmitoleoylation is required for efficient binding to frizzled receptors. Depalmitoleoylation leads to Wnt signaling pathway inhibition.

It localises to the secreted. The protein localises to the extracellular space. The protein resides in the extracellular matrix. Its function is as follows. Ligand for members of the frizzled family of seven transmembrane receptors. Functions in the canonical Wnt signaling pathway that results in activation of transcription factors of the TCF/LEF family. Required for normal embryonic mesoderm development and formation of caudal somites. Required for normal morphogenesis of the developing neural tube. In Meleagris gallopavo (Wild turkey), this protein is Protein Wnt-3a (WNT3A).